An 893-amino-acid polypeptide reads, in one-letter code: Flippase kinase 1 (893 aa).

The segment covering 1–23 (MAGHHHEHEQERDHEQEHEHDSL) has biased composition (basic and acidic residues). Disordered regions lie at residues 1–124 (MAGH…SSKL), 129–148 (PMTSVANASPASPPLSPTIP), and 163–243 (QHEH…ERAG). Residues 24–42 (QRPTTGSERTRSISFSKLL) are compositionally biased toward polar residues. Over residues 49–62 (NASSSNNMSVSSVN) the composition is skewed to low complexity. Over residues 76-87 (NNSGSEGQSSRF) the composition is skewed to polar residues. Residues 96–122 (SGNSSKNASAHNSSQSSLEGDSASSSS) are compositionally biased toward low complexity. Phosphoserine occurs at positions 140, 144, 171, 175, and 185. Positions 206–216 (SQNSNNSSSTS) are enriched in low complexity. Polar residues predominate over residues 228–237 (GSQGFSSNNP). Ser300 carries the post-translational modification Phosphoserine. Polar residues predominate over residues 334–355 (DTLNGSPSRGSSKSPTITQTFP). A disordered region spans residues 334 to 480 (DTLNGSPSRG…PRRSRRLRTK (147 aa)). Residues 370–380 (NNDKHDEKEEQ) show a composition bias toward basic and acidic residues. Polar residues predominate over residues 381 to 399 (QTTTDNKTRNLSPTKQNGK). Residue Ser414 is modified to Phosphoserine. Positions 422–439 (ASATSPTSSSARKTSGSS) are enriched in low complexity. The residue at position 462 (Ser462) is a Phosphoserine. Positions 496 to 777 (FEKIRLLGQG…AADVKKHPFF (282 aa)) constitute a Protein kinase domain. ATP-binding positions include 502–510 (LGQGDVGKV) and Lys525. The active-site Proton acceptor is the Asp621. The region spanning 778-861 (KKVQWSLLRN…MSLMEQDNNS (84 aa)) is the AGC-kinase C-terminal domain. A disordered region spans residues 874 to 893 (AYTPNSNRSRSNSHRTFFKR). A compositionally biased stretch (basic residues) spans 884 to 893 (SNSHRTFFKR).

This sequence belongs to the protein kinase superfamily. Ser/Thr protein kinase family. KIN82 subfamily. The N-terminal non-catalytic domain is phosphorylated by YPK1.

It localises to the cytoplasm. It is found in the cell membrane. It carries out the reaction L-seryl-[protein] + ATP = O-phospho-L-seryl-[protein] + ADP + H(+). The enzyme catalyses L-threonyl-[protein] + ATP = O-phospho-L-threonyl-[protein] + ADP + H(+). Its activity is regulated as follows. Down-regulated by YKP1 phosphorylation. This effect is counteracted in the presence of mannosyl-inositolphosphorylceramide (MIPC). In terms of biological role, flippase activator that phosphorylates DNF1 and DNF2 and which is involved in the generation of phospholipid asymmetry in membranes by the inward translocation of phospholipids and in the retrieval pathway from early endosomes to the trans-Golgi network (TGN). Also phosphorylates the N-terminal half of YPK1. Involved in pheromone-response. The protein is Flippase kinase 1 (FPK1) of Saccharomyces cerevisiae (strain ATCC 204508 / S288c) (Baker's yeast).